A 1028-amino-acid polypeptide reads, in one-letter code: Unconventional myosin-Ic (1028 aa).

The residue at position 1 (Met1) is an N-acetylmethionine. The Myosin motor domain maps to 12–696 (GVQDFVLLEN…TLFATEDALE (685 aa)). ATP-binding positions include Asn53, Tyr61, 104-113 (SGESGAGKTE), and 157-161 (NDNSS). Lys348 carries the N6-methyllysine modification. The interval 573-595 (LSKLMEILMSKQPSYVRCIKPND) is actin-binding. IQ domains lie at 699 to 728 (KHSIATFLQARWRGYHQRQKFLHMKHSAVE) and 722 to 751 (MKHSAVEIQSWWRGTIGRRKAAKRKWAVDV). In terms of domain architecture, TH1 spans 850 to 1024 (KDNYPQSVPR…NGHLSVVAPR (175 aa)).

This sequence belongs to the TRAFAC class myosin-kinesin ATPase superfamily. Myosin family. As to quaternary structure, interacts (via its IQ motifs) with calmodulin. In terms of tissue distribution, expressed in brain and the sacculus of the internal ear.

It is found in the cytoplasm. Its subcellular location is the cell membrane. The protein resides in the cell projection. The protein localises to the ruffle membrane. It localises to the cytoplasmic vesicle. It is found in the stereocilium membrane. Functionally, myosins are actin-based motor molecules with ATPase activity. Unconventional myosins serve in intracellular movements. Their highly divergent tails are presumed to bind to membranous compartments, which would be moved relative to actin filaments. This chain is Unconventional myosin-Ic (Myo1c), found in Aquarana catesbeiana (American bullfrog).